A 450-amino-acid polypeptide reads, in one-letter code: tRNA modification GTPase MnmE (450 aa).

(6S)-5-formyl-5,6,7,8-tetrahydrofolate contacts are provided by Arg-23, Glu-79, and Lys-118. The 161-residue stretch at 214-374 (GITLILVGKP…LKEHILNKVG (161 aa)) folds into the TrmE-type G domain. Position 224 (Asn-224) interacts with K(+). GTP-binding positions include 224–229 (NAGKSS), 243–249 (TSIAGTT), and 268–271 (DTAG). Residue Ser-228 participates in Mg(2+) binding. K(+)-binding residues include Thr-243, Ile-245, and Thr-248. Residue Thr-249 coordinates Mg(2+). Lys-450 provides a ligand contact to (6S)-5-formyl-5,6,7,8-tetrahydrofolate.

This sequence belongs to the TRAFAC class TrmE-Era-EngA-EngB-Septin-like GTPase superfamily. TrmE GTPase family. In terms of assembly, homodimer. Heterotetramer of two MnmE and two MnmG subunits. K(+) serves as cofactor.

Its subcellular location is the cytoplasm. Its function is as follows. Exhibits a very high intrinsic GTPase hydrolysis rate. Involved in the addition of a carboxymethylaminomethyl (cmnm) group at the wobble position (U34) of certain tRNAs, forming tRNA-cmnm(5)s(2)U34. The sequence is that of tRNA modification GTPase MnmE from Francisella tularensis subsp. tularensis (strain FSC 198).